A 37-amino-acid chain; its full sequence is Dolichyl-diphosphooligosaccharide--protein glycosyltransferase subunit 4B (37 aa).

Residues 1-8 (MFDDQDLG) lie on the Lumenal side of the membrane. A helical membrane pass occupies residues 9-29 (FFANFLGIFIFVLVMAYHFVM). Over 30-37 (ADVKYEGN) the chain is Cytoplasmic.

It belongs to the OST4 family. In terms of assembly, component of the oligosaccharyltransferase (OST) complex.

It localises to the endoplasmic reticulum membrane. In terms of biological role, subunit of the oligosaccharyl transferase (OST) complex that catalyzes the initial transfer of a defined glycan (Glc(3)Man(9)GlcNAc(2) in eukaryotes) from the lipid carrier dolichol-pyrophosphate to an asparagine residue within an Asn-X-Ser/Thr consensus motif in nascent polypeptide chains, the first step in protein N-glycosylation. N-glycosylation occurs cotranslationally and the complex associates with the Sec61 complex at the channel-forming translocon complex that mediates protein translocation across the endoplasmic reticulum (ER). All subunits are required for a maximal enzyme activity. The chain is Dolichyl-diphosphooligosaccharide--protein glycosyltransferase subunit 4B (OST4B) from Oryza sativa subsp. japonica (Rice).